A 448-amino-acid polypeptide reads, in one-letter code: Asparagine--tRNA ligase (448 aa).

This sequence belongs to the class-II aminoacyl-tRNA synthetase family. As to quaternary structure, homodimer.

It is found in the cytoplasm. The catalysed reaction is tRNA(Asn) + L-asparagine + ATP = L-asparaginyl-tRNA(Asn) + AMP + diphosphate + H(+). The polypeptide is Asparagine--tRNA ligase (Streptococcus agalactiae serotype Ia (strain ATCC 27591 / A909 / CDC SS700)).